Consider the following 417-residue polypeptide: NADH-quinone oxidoreductase subunit D (417 aa).

The protein belongs to the complex I 49 kDa subunit family. NDH-1 is composed of 14 different subunits. Subunits NuoB, C, D, E, F, and G constitute the peripheral sector of the complex.

The protein resides in the cell inner membrane. The enzyme catalyses a quinone + NADH + 5 H(+)(in) = a quinol + NAD(+) + 4 H(+)(out). Functionally, NDH-1 shuttles electrons from NADH, via FMN and iron-sulfur (Fe-S) centers, to quinones in the respiratory chain. The immediate electron acceptor for the enzyme in this species is believed to be ubiquinone. Couples the redox reaction to proton translocation (for every two electrons transferred, four hydrogen ions are translocated across the cytoplasmic membrane), and thus conserves the redox energy in a proton gradient. This chain is NADH-quinone oxidoreductase subunit D, found in Burkholderia ambifaria (strain ATCC BAA-244 / DSM 16087 / CCUG 44356 / LMG 19182 / AMMD) (Burkholderia cepacia (strain AMMD)).